Consider the following 336-residue polypeptide: MFLTLIAAIISFMVSAFTMPYFIKFYQLKKIGGQQMHEDVKQHLAKAGTPTMGGTVFLLVATAVSLLVSLFSIKNTQSLALISGILSIVVIYGIIGFLDDFLKIFKQINEGLTAKQKLALQLAGGLMFYFLHVSPSGISSINVFGYQLPLGIFYLFFVLFWVVGFSNAVNLTDGIDGLASISVVISLVTYGVIAYVQSQFDVLLLIGAMIGALLGFFCFNHKPAKVFMGDVGSLALGAMLAAISIALRQEWTLLIIGIVYVLETSSVMLQVSYFKYTKKKYGEGRRIFRMTPFHHHLELGGLSGKGKKWSEWQVDAFLWGVGSLASLLVLAILYVF.

A run of 10 helical transmembrane segments spans residues 3 to 23, 53 to 73, 78 to 98, 118 to 138, 143 to 163, 174 to 194, 200 to 220, 226 to 246, 251 to 271, and 316 to 336; these read LTLI…PYFI, GGTV…LFSI, SLAL…IGFL, LALQ…PSGI, VFGY…FWVV, GIDG…GVIA, FDVL…FCFN, VFMG…ISIA, WTLL…MLQV, and AFLW…LYVF.

The protein belongs to the glycosyltransferase 4 family. MraY subfamily. It depends on Mg(2+) as a cofactor.

The protein localises to the cell membrane. It catalyses the reaction UDP-N-acetyl-alpha-D-muramoyl-L-alanyl-gamma-D-glutamyl-L-lysyl-D-alanyl-D-alanine + di-trans,octa-cis-undecaprenyl phosphate = Mur2Ac(oyl-L-Ala-gamma-D-Glu-L-Lys-D-Ala-D-Ala)-di-trans,octa-cis-undecaprenyl diphosphate + UMP. Its pathway is cell wall biogenesis; peptidoglycan biosynthesis. Functionally, catalyzes the initial step of the lipid cycle reactions in the biosynthesis of the cell wall peptidoglycan: transfers peptidoglycan precursor phospho-MurNAc-pentapeptide from UDP-MurNAc-pentapeptide onto the lipid carrier undecaprenyl phosphate, yielding undecaprenyl-pyrophosphoryl-MurNAc-pentapeptide, known as lipid I. In Streptococcus pyogenes serotype M49 (strain NZ131), this protein is Phospho-N-acetylmuramoyl-pentapeptide-transferase.